The primary structure comprises 124 residues: MAVVKKKRNVVVGRVHICATYNNVIVTIADQQGHVLVTTSAGACNFKGSKKSTPYAAQETVARAVKAVIERNGMKTVSVCISGPGAGREAAIRAVQACNLNVTSIKDVTKLPHNGCKLPKRRRV.

The protein belongs to the universal ribosomal protein uS11 family. Part of the 30S ribosomal subunit. Interacts with proteins S7 and S18. Binds to IF-3.

Located on the platform of the 30S subunit, it bridges several disparate RNA helices of the 16S rRNA. Forms part of the Shine-Dalgarno cleft in the 70S ribosome. The chain is Small ribosomal subunit protein uS11 from Anaplasma phagocytophilum (strain HZ).